Consider the following 2910-residue polypeptide: Highly reducing polyketide synthase calA (2910 aa).

Residues 8-444 (NEPLAIVGSA…GTNAHAILES (437 aa)) form the Ketosynthase family 3 (KS3) domain. Active-site for beta-ketoacyl synthase activity residues include C181, H320, and H364. The segment at 559 to 875 (VFTGQGAQYA…PYYGVLSRGT (317 aa)) is acyl transferase (AT) domain. Positions 948-1082 (NQLLGTMMPD…LHIVFGPSSE (135 aa)) are N-terminal hotdog fold. The region spanning 948–1245 (NQLLGTMMPD…LKPLGALTAK (298 aa)) is the PKS/mFAS DH domain. Residues 949–1242 (QLLGTMMPDS…GVELKPLGAL (294 aa)) form a dehydratase (DH) domain region. H980 acts as the Proton acceptor; for dehydratase activity in catalysis. A C-terminal hotdog fold region spans residues 1095 to 1245 (MISVDNERFY…LKPLGALTAK (151 aa)). D1156 serves as the catalytic Proton donor; for dehydratase activity. The segment at 1399–1586 (EAGLWIGKII…GIDSTAPQAF (188 aa)) is methyltransferase (MT) domain. Residues 2125 to 2298 (TYWLCGLSGA…AATALNVGAI (174 aa)) form a ketoreductase (KR)domain region. Residues 2406-2488 (QSRSEVLAVV…ELAELAAEQA (83 aa)) enclose the Carrier domain. At S2448 the chain carries O-(pantetheine 4'-phosphoryl)serine. Positions 2492 to 2565 (LLPGLGGEAP…TPDPHSTKGP (74 aa)) are disordered. Positions 2522–2534 (VPQSDETGSSSAD) are enriched in polar residues. The segment covering 2550 to 2559 (GYTTPTTPDP) has biased composition (low complexity). A reductase (R) domain region spans residues 2597–2826 (LTGVSGLLGR…DFVYVKNAAD (230 aa)).

The protein operates within secondary metabolite biosynthesis. Highly reducing polyketide synthase; part of the gene cluster that mediates the biosynthesis of calbistrin A and related compounds. Calbistrin A is a secondary metabolite with an interesting structure that was recently found to have bioactivity against leukemia cells. It consists of two polyketides linked by an ester bond: a bicyclic decalin containing polyketide and a linear 12 carbon dioic acid structure. The polyketide synthase calA is probably responsible for forming the decalin moiety. Because calA lacks a designated enoylreductase (ER) domain, the required activity is provided by the trans-enoyl reductase calK. Following release from the PKS, calF then probably catalyzes the oxidation and the subsequent Diels Alder cycloisomerization that lead to the formation of the decalin moiety. The decalin polyketide backbone includes two C-methyl groups, at C7 and C11 in backbone, of which the C7 position is probably methylated by the methyltransferase domain of calA. A candidate for adding the methyl group at C11, if not done by CalA, is the cluster methyltransferase calH. Several additional tailoring enzymes within the cluster could be involved in the modification of the decalin polyketide product. Those include the 3 cytochrome P450 monooxygenases CalE, CalG and CalL, of which one might be responsible for the introduction of the extra hydroxyl group attached to the backbone of the decalin moiety, at position C9 in the backbone, that allows for attachment of the linear moiety. One tailoring enzyme activity that is expected to be involved in biosynthesis of calbistrin is an acyltransferase for connecting the two polyketide synthase products, and which could be performed by the cluster acyltransferase calJ. The enzyme responsible for the biosynthesis of the linear moiety, probably a second PKS, has not been identified yet. The sequence is that of Highly reducing polyketide synthase calA from Penicillium decumbens.